Reading from the N-terminus, the 372-residue chain is Chaperone protein DnaJ (372 aa).

The J domain maps to 5–70 (DYYELLEISR…EKKSIYDRYG (66 aa)). Residues 134–211 (GCNKEINYKY…CKGTGYEEVK (78 aa)) form a CR-type zinc finger. 8 residues coordinate Zn(2+): Cys-147, Cys-150, Cys-163, Cys-166, Cys-185, Cys-188, Cys-199, and Cys-202. CXXCXGXG motif repeat units lie at residues 147–154 (CKPCEGTG), 163–170 (CPTCKGQG), 185–192 (CPRCGGTG), and 199–206 (CKSCKGTG).

The protein belongs to the DnaJ family. Homodimer. Requires Zn(2+) as cofactor.

It localises to the cytoplasm. In terms of biological role, participates actively in the response to hyperosmotic and heat shock by preventing the aggregation of stress-denatured proteins and by disaggregating proteins, also in an autonomous, DnaK-independent fashion. Unfolded proteins bind initially to DnaJ; upon interaction with the DnaJ-bound protein, DnaK hydrolyzes its bound ATP, resulting in the formation of a stable complex. GrpE releases ADP from DnaK; ATP binding to DnaK triggers the release of the substrate protein, thus completing the reaction cycle. Several rounds of ATP-dependent interactions between DnaJ, DnaK and GrpE are required for fully efficient folding. Also involved, together with DnaK and GrpE, in the DNA replication of plasmids through activation of initiation proteins. This chain is Chaperone protein DnaJ, found in Aliarcobacter butzleri (strain RM4018) (Arcobacter butzleri).